The sequence spans 634 residues: 1-deoxy-D-xylulose-5-phosphate synthase (634 aa).

Residues H74 and 115–117 (AHS) contribute to the thiamine diphosphate site. D146 is a binding site for Mg(2+). Residues 147-148 (GA), N176, Y283, and E365 contribute to the thiamine diphosphate site. N176 is a Mg(2+) binding site.

It belongs to the transketolase family. DXPS subfamily. As to quaternary structure, homodimer. Mg(2+) is required as a cofactor. Requires thiamine diphosphate as cofactor.

It catalyses the reaction D-glyceraldehyde 3-phosphate + pyruvate + H(+) = 1-deoxy-D-xylulose 5-phosphate + CO2. It functions in the pathway metabolic intermediate biosynthesis; 1-deoxy-D-xylulose 5-phosphate biosynthesis; 1-deoxy-D-xylulose 5-phosphate from D-glyceraldehyde 3-phosphate and pyruvate: step 1/1. In terms of biological role, catalyzes the acyloin condensation reaction between C atoms 2 and 3 of pyruvate and glyceraldehyde 3-phosphate to yield 1-deoxy-D-xylulose-5-phosphate (DXP). The chain is 1-deoxy-D-xylulose-5-phosphate synthase from Burkholderia thailandensis (strain ATCC 700388 / DSM 13276 / CCUG 48851 / CIP 106301 / E264).